The chain runs to 92 residues: YcgL domain-containing protein Sbal_1869 (92 aa).

The region spanning 1–85 (MLCAVYKSSR…PQVNLLAEHK (85 aa)) is the YcgL domain.

The polypeptide is YcgL domain-containing protein Sbal_1869 (Shewanella baltica (strain OS155 / ATCC BAA-1091)).